Consider the following 266-residue polypeptide: UPF0354 protein lmo1608 (266 aa).

This sequence belongs to the UPF0354 family.

The sequence is that of UPF0354 protein lmo1608 from Listeria monocytogenes serovar 1/2a (strain ATCC BAA-679 / EGD-e).